The sequence spans 171 residues: uncharacterized protein (171 aa).

The 169-residue stretch at 3–171 (KKVAIILANE…FNREIVKQLQ (169 aa)) folds into the PfpI endopeptidase domain.

It belongs to the peptidase C56 family.

This is an uncharacterized protein from Staphylococcus aureus (strain COL).